The sequence spans 24 residues: MAPRGFSCLLLSTSEIDLPVKRRA.

It belongs to the humanin family.

It localises to the secreted. Its subcellular location is the cytoplasm. In terms of biological role, plays a role as a neuroprotective and antiapoptotic factor. This Homo sapiens (Human) protein is Humanin-like 12.